Reading from the N-terminus, the 754-residue chain is Deadenylation-dependent mRNA-decapping factor pdc2 (754 aa).

The segment at Leu499–Ala754 is interaction with lsm1.

This sequence belongs to the PAT1 family. As to quaternary structure, interacts with dcp2. Interacts with lsm1; via C-terminus.

The protein resides in the cytoplasm. It localises to the nucleus. It is found in the P-body. Activator of decapping that functions as a general and active mechanism of translational repression and required for P-body formation. Stabilizes the 3' terminus of mRNAs and modulates the rates of mRNA-decapping that occur following deadenylation. Might be required for promoting the formation or the stabilization of the preinitiation translation complexes. Necessary for accurate chromosome transmission during cell division. Together with lsm1, recruits the deadenylase ccr4 to P-bodies. The chain is Deadenylation-dependent mRNA-decapping factor pdc2 from Schizosaccharomyces pombe (strain 972 / ATCC 24843) (Fission yeast).